A 55-amino-acid polypeptide reads, in one-letter code: Large ribosomal subunit protein bL33c (55 aa).

The protein belongs to the bacterial ribosomal protein bL33 family.

It localises to the plastid. Its subcellular location is the chloroplast. The chain is Large ribosomal subunit protein bL33c from Emiliania huxleyi (Coccolithophore).